The sequence spans 191 residues: Programmed cell death protein 6 (191 aa).

N-acetylalanine is present on Ala2. 5 EF-hand domains span residues 23-58, 59-89, 90-125, 126-161, and 162-191; these read PDQSFLWNVFQRVDKDRSGVISDNELQQALSNGTWT, PFNPVTVRSIISMFDRENKAGVNFSEFTGVW, KYITDWQNVFRTYDRDNSGMIDKHELKQALSGFGYR, LSDQFHDILIRKFDRQGRGQIAFDDFIQGCIVLQRL, and TDIFRRYDTDQDGWIQVSYEQYLSMVFSIV. Asp36, Asp38, Ser40, Val42, and Glu47 together coordinate Ca(2+). Ca(2+) is bound by residues Asp103, Asp105, Ser107, Met109, and Glu114. 4 residues coordinate Mg(2+): Asp169, Asp171, Asp173, and Trp175.

Homodimer and heterodimer; heterodimerizes (via the EF-hand 5) with PEF1. Isoform 1 and isoform 2 self-associate; probably forming homodimers. Interacts with CPNE4 (via VWFA domain). Interacts with PDCD6IP; the interaction is calcium-dependent. Interacts with RBM22. Interacts with PLSCR4. Interacts with ANXA7 and TSG101. Interacts with DAPK1. Interacts with SEC31A; the interaction is calcium-dependent and promotes monoubiquitination of SEC31A. Interacts with ANXA11 (via N-terminus); the interaction is calcium-dependent. Interacts with PLSCR3 (via N-terminus); the interaction is calcium-dependent. Interacts with MCOLN1; the interaction is calcium-dependent. Interacts with KDR; the interaction is calcium-dependent. Interacts with HEBP2; the interaction is calcium-dependent. Interacts with TFG. Isoform 1: Interacts with SHISA5, leading to stabilize it. Isoform 2: Does not interact with SHISA5. Isoform 2: Does not interact with PDCD6IP, TSG101, ANXA7 and ANXA11.

It localises to the endoplasmic reticulum membrane. The protein localises to the cytoplasmic vesicle. Its subcellular location is the COPII-coated vesicle membrane. The protein resides in the cytoplasm. It is found in the nucleus. It localises to the endosome. Calcium sensor that plays a key role in processes such as endoplasmic reticulum (ER)-Golgi vesicular transport, endosomal biogenesis or membrane repair. Acts as an adapter that bridges unrelated proteins or stabilizes weak protein-protein complexes in response to calcium: calcium-binding triggers exposure of apolar surface, promoting interaction with different sets of proteins thanks to 3 different hydrophobic pockets, leading to translocation to membranes. Involved in ER-Golgi transport. Regulates ER-Golgi transport by promoting the association between PDCD6IP and TSG101, thereby bridging together the ESCRT-III and ESCRT-I complexes. Together with PEF1, acts as a calcium-dependent adapter for the BCR(KLHL12) complex, a complex involved in ER-Golgi transport by regulating the size of COPII coats. In response to cytosolic calcium increase, the heterodimer formed with PEF1 interacts with, and bridges together the BCR(KLHL12) complex and SEC31 (SEC31A or SEC31B), promoting monoubiquitination of SEC31 and subsequent collagen export, which is required for neural crest specification. Involved in the regulation of the distribution and function of MCOLN1 in the endosomal pathway. Promotes localization and polymerization of TFG at endoplasmic reticulum exit site. Required for T-cell receptor-, Fas-, and glucocorticoid-induced apoptosis. May mediate Ca(2+)-regulated signals along the death pathway: interaction with DAPK1 can accelerate apoptotic cell death by increasing caspase-3 activity. Its role in apoptosis may however be indirect, as suggested by knockout experiments. May inhibit KDR/VEGFR2-dependent angiogenesis; the function involves inhibition of VEGF-induced phosphorylation of the Akt signaling pathway. In terms of biological role, has a lower Ca(2+) affinity than isoform 1. The sequence is that of Programmed cell death protein 6 from Rattus norvegicus (Rat).